The following is a 126-amino-acid chain: MSALDTSIRVEVKTEYIEQQSSPEDEKYLFSYTITIINLGEQAAKLETRHWIITDANGNTSEVQGAGVVGETPTIPPNTAYQYTSGTLLDTPLGIMHGTYGMVSESGERFEAIIKPFRLATPGLLH.

The 125-residue stretch at 2-126 (SALDTSIRVE…FRLATPGLLH (125 aa)) folds into the ApaG domain.

This is Protein ApaG from Shewanella sp. (strain W3-18-1).